The chain runs to 367 residues: Pentatricopeptide repeat-containing protein At1g11900 (367 aa).

PPR repeat units follow at residues 69 to 103, 104 to 139, 141 to 175, 176 to 210, 211 to 241, 247 to 281, 282 to 316, and 317 to 347; these read SKIDYTNLVEKFTRDGNLSGAYDLLQSLQEKNICL, PISVFKNLLAAAGELNDMKLSCRVFREVLILPGKEP, SSDCYLNLARAFINTDDCTYLTSLLKEISESSLPY, RLIVMNRIIFAFAETRQIDKVLMILKEMKEWECKP, DVITYNSVLDILGRAGLVNEILGVLSTMKED, NIITYNTVLNGMRKACRFDMCLVIYNEMVQCGIEP, DLLSYTAVIDSLGRSGNVKESLRLFDEMKQRQIRP, and SVYVYRALIDCLKKSGDFQSALQLSDELKNT.

It belongs to the PPR family. P subfamily.

This is Pentatricopeptide repeat-containing protein At1g11900 from Arabidopsis thaliana (Mouse-ear cress).